A 582-amino-acid polypeptide reads, in one-letter code: Aspartate--tRNA ligase (582 aa).

E174 is a binding site for L-aspartate. Residues 198–201 form an aspartate region; sequence QITK. R220 is an L-aspartate binding site. ATP-binding positions include 220–222 and Q229; that span reads RDE. Residue H443 coordinates L-aspartate. E477 provides a ligand contact to ATP. L-aspartate is bound at residue R484. 529–532 provides a ligand contact to ATP; the sequence is GLDR.

The protein belongs to the class-II aminoacyl-tRNA synthetase family. Type 1 subfamily. Homodimer.

The protein localises to the cytoplasm. It carries out the reaction tRNA(Asp) + L-aspartate + ATP = L-aspartyl-tRNA(Asp) + AMP + diphosphate. In terms of biological role, catalyzes the attachment of L-aspartate to tRNA(Asp) in a two-step reaction: L-aspartate is first activated by ATP to form Asp-AMP and then transferred to the acceptor end of tRNA(Asp). This is Aspartate--tRNA ligase from Streptococcus pyogenes serotype M18 (strain MGAS8232).